We begin with the raw amino-acid sequence, 589 residues long: Phenylalanine--tRNA ligase beta subunit (589 aa).

A B5 domain is found at 302–379; it reads LAYRKEMVRA…IAYGYSNIQM (78 aa). The Mg(2+) site is built by Asp-357, Asp-363, Glu-366, and Asp-367.

The protein belongs to the phenylalanyl-tRNA synthetase beta subunit family. Type 2 subfamily. Heterotetramer; dimer of two heterodimers formed by FARSA and FARSB. It depends on Mg(2+) as a cofactor.

The protein localises to the cytoplasm. The catalysed reaction is tRNA(Phe) + L-phenylalanine + ATP = L-phenylalanyl-tRNA(Phe) + AMP + diphosphate + H(+). In Pongo abelii (Sumatran orangutan), this protein is Phenylalanine--tRNA ligase beta subunit (FARSB).